A 296-amino-acid chain; its full sequence is Nucleotide-binding protein ABC3036 (296 aa).

13-20 lines the ATP pocket; that stretch reads GMSGAGKS. A GTP-binding site is contributed by 64 to 67; the sequence is DLRG.

It belongs to the RapZ-like family.

Displays ATPase and GTPase activities. The polypeptide is Nucleotide-binding protein ABC3036 (Shouchella clausii (strain KSM-K16) (Alkalihalobacillus clausii)).